Reading from the N-terminus, the 249-residue chain is Tetrahydromethanopterin S-methyltransferase subunit D (249 aa).

6 consecutive transmembrane segments (helical) span residues 9–29, 47–67, 75–95, 138–158, 183–203, and 224–244; these read ILWLVFIIIGGVLISWSVHFV, GTVQLAAGAGLTGLVSAGFMM, LILASGAVGAMIMISVTMIVG, VSFVSGVIGGLLGGIGGALVY, LVGIAAMFAIGIFFVNAVIPS, and AVISSFVATILCAIVAVIAIS.

Belongs to the MtrD family. As to quaternary structure, the complex is composed of 8 subunits; MtrA, MtrB, MtrC, MtrD, MtrE, MtrF, MtrG and MtrH.

Its subcellular location is the cell membrane. It carries out the reaction 5-methyl-5,6,7,8-tetrahydromethanopterin + coenzyme M + 2 Na(+)(in) = 5,6,7,8-tetrahydromethanopterin + methyl-coenzyme M + 2 Na(+)(out). The protein operates within one-carbon metabolism; methanogenesis from CO(2); methyl-coenzyme M from 5,10-methylene-5,6,7,8-tetrahydromethanopterin: step 2/2. Functionally, part of a complex that catalyzes the formation of methyl-coenzyme M and tetrahydromethanopterin from coenzyme M and methyl-tetrahydromethanopterin. This is an energy-conserving, sodium-ion translocating step. The sequence is that of Tetrahydromethanopterin S-methyltransferase subunit D from Methanosarcina acetivorans (strain ATCC 35395 / DSM 2834 / JCM 12185 / C2A).